The chain runs to 93 residues: Pyrimidine/purine nucleoside phosphorylase (93 aa).

This sequence belongs to the nucleoside phosphorylase PpnP family.

The enzyme catalyses a purine D-ribonucleoside + phosphate = a purine nucleobase + alpha-D-ribose 1-phosphate. It catalyses the reaction adenosine + phosphate = alpha-D-ribose 1-phosphate + adenine. The catalysed reaction is cytidine + phosphate = cytosine + alpha-D-ribose 1-phosphate. It carries out the reaction guanosine + phosphate = alpha-D-ribose 1-phosphate + guanine. The enzyme catalyses inosine + phosphate = alpha-D-ribose 1-phosphate + hypoxanthine. It catalyses the reaction thymidine + phosphate = 2-deoxy-alpha-D-ribose 1-phosphate + thymine. The catalysed reaction is uridine + phosphate = alpha-D-ribose 1-phosphate + uracil. It carries out the reaction xanthosine + phosphate = alpha-D-ribose 1-phosphate + xanthine. Functionally, catalyzes the phosphorolysis of diverse nucleosides, yielding D-ribose 1-phosphate and the respective free bases. Can use uridine, adenosine, guanosine, cytidine, thymidine, inosine and xanthosine as substrates. Also catalyzes the reverse reactions. This chain is Pyrimidine/purine nucleoside phosphorylase, found in Photobacterium profundum (strain SS9).